We begin with the raw amino-acid sequence, 293 residues long: DOMON domain-containing protein FRRS1L (293 aa).

A signal peptide spans Met-1 to Ala-28. Positions Ser-29–Asp-60 are disordered. Residues Ala-46–Asp-60 show a composition bias toward basic and acidic residues. Residues Cys-119–Ala-234 form the DOMON domain. The chain crosses the membrane as a helical span at residues Thr-271–Gly-291.

In terms of assembly, component of the outer core of AMPAR complex. AMPAR complex consists of an inner core made of 4 pore-forming GluA/GRIA proteins (GRIA1, GRIA2, GRIA3 and GRIA4) and 4 major auxiliary subunits arranged in a twofold symmetry. One of the two pairs of distinct binding sites is occupied either by CNIH2, CNIH3 or CACNG2, CACNG3. The other harbors CACNG2, CACNG3, CACNG4, CACNG8 or GSG1L. This inner core of AMPAR complex is complemented by outer core constituents binding directly to the GluA/GRIA proteins at sites distinct from the interaction sites of the inner core constituents. Outer core constituents include at least PRRT1, PRRT2, CKAMP44/SHISA9, FRRS1L and NRN1. The proteins of the inner and outer core serve as a platform for other, more peripherally associated AMPAR constituents. Alone or in combination, these auxiliary subunits control the gating and pharmacology of the AMPAR complex and profoundly impact their biogenesis and protein processing. In terms of tissue distribution, expressed in the brain (at protein level). In embryos expression is evident in the ventral forebrain, but a lower level is seen in the remainder of the embryos. In the adult brain, expressed in the cortex, cerebellum, hippocampus and basal ganglia.

It localises to the cell membrane. It is found in the synapse. In terms of biological role, important modulator of glutamate signaling pathway. The polypeptide is DOMON domain-containing protein FRRS1L (Frrs1l) (Mus musculus (Mouse)).